The following is a 274-amino-acid chain: 3-methyl-2-oxobutanoate hydroxymethyltransferase (274 aa).

Mg(2+) contacts are provided by aspartate 46 and aspartate 85. Residues aspartate 46–serine 47, aspartate 85, and lysine 115 contribute to the 3-methyl-2-oxobutanoate site. Glutamate 117 is a Mg(2+) binding site. Glutamate 184 serves as the catalytic Proton acceptor.

The protein belongs to the PanB family. In terms of assembly, homodecamer; pentamer of dimers. Requires Mg(2+) as cofactor.

Its subcellular location is the cytoplasm. It carries out the reaction 3-methyl-2-oxobutanoate + (6R)-5,10-methylene-5,6,7,8-tetrahydrofolate + H2O = 2-dehydropantoate + (6S)-5,6,7,8-tetrahydrofolate. It participates in cofactor biosynthesis; (R)-pantothenate biosynthesis; (R)-pantoate from 3-methyl-2-oxobutanoate: step 1/2. Functionally, catalyzes the reversible reaction in which hydroxymethyl group from 5,10-methylenetetrahydrofolate is transferred onto alpha-ketoisovalerate to form ketopantoate. This Thermoanaerobacter pseudethanolicus (strain ATCC 33223 / 39E) (Clostridium thermohydrosulfuricum) protein is 3-methyl-2-oxobutanoate hydroxymethyltransferase.